Consider the following 247-residue polypeptide: MIERYFQKVNERLELVLKNERENLKKAAYVVSEAIQKGGIIQLFGCGHSHILTEEVFYRAGGLVPIKPIFFEPLMLHEGAVRSSMLERINDLAHEFMADEDIRREDVFFVLSTSGRNPVPIDVALTAKNKGAYTIVITSLEYSMSQPSRHKSGKLLYEVADLVINNYSVKGDAILSHESVSVPFSPTSTVVGCTILNAIFAEAIVLMAENGFEPPIFLSGNIEGADDHNNKIIEKYKDRIPILIGKS.

Positions Val-31–Pro-214 constitute an SIS domain.

Belongs to the UPF0309 family.

The sequence is that of UPF0309 protein GWCH70_1414 from Geobacillus sp. (strain WCH70).